A 268-amino-acid polypeptide reads, in one-letter code: Putative S-adenosyl-L-methionine-dependent methyltransferase MAP_0663 (268 aa).

S-adenosyl-L-methionine contacts are provided by residues aspartate 124 and 153–154 (DL).

It belongs to the UPF0677 family.

Functionally, exhibits S-adenosyl-L-methionine-dependent methyltransferase activity. This is Putative S-adenosyl-L-methionine-dependent methyltransferase MAP_0663 from Mycolicibacterium paratuberculosis (strain ATCC BAA-968 / K-10) (Mycobacterium paratuberculosis).